We begin with the raw amino-acid sequence, 342 residues long: Phenylalanine--tRNA ligase alpha subunit (342 aa).

Mg(2+) is bound at residue E260.

It belongs to the class-II aminoacyl-tRNA synthetase family. Phe-tRNA synthetase alpha subunit type 1 subfamily. In terms of assembly, tetramer of two alpha and two beta subunits. Mg(2+) serves as cofactor.

The protein resides in the cytoplasm. It catalyses the reaction tRNA(Phe) + L-phenylalanine + ATP = L-phenylalanyl-tRNA(Phe) + AMP + diphosphate + H(+). This chain is Phenylalanine--tRNA ligase alpha subunit, found in Mycobacterium avium (strain 104).